A 159-amino-acid polypeptide reads, in one-letter code: NADH-quinone oxidoreductase subunit I (159 aa).

4Fe-4S ferredoxin-type domains are found at residues 51-80 and 90-119; these read RRYENGEERCIACKLCEAICPAQAIVIEAD and TRYDIDMTKCIYCGLCQEACPVDAIVEGPN. Residues C60, C63, C66, C70, C99, C102, C105, and C109 each coordinate [4Fe-4S] cluster.

This sequence belongs to the complex I 23 kDa subunit family. NDH-1 is composed of 14 different subunits. Subunits NuoA, H, J, K, L, M, N constitute the membrane sector of the complex. It depends on [4Fe-4S] cluster as a cofactor.

The protein localises to the cell membrane. The enzyme catalyses a quinone + NADH + 5 H(+)(in) = a quinol + NAD(+) + 4 H(+)(out). Its function is as follows. NDH-1 shuttles electrons from NADH, via FMN and iron-sulfur (Fe-S) centers, to quinones in the respiratory chain. The immediate electron acceptor for the enzyme in this species is believed to be ubiquinone. Couples the redox reaction to proton translocation (for every two electrons transferred, four hydrogen ions are translocated across the cytoplasmic membrane), and thus conserves the redox energy in a proton gradient. This chain is NADH-quinone oxidoreductase subunit I, found in Rickettsia africae (strain ESF-5).